Reading from the N-terminus, the 69-residue chain is Large ribosomal subunit protein bL28 (69 aa).

It belongs to the bacterial ribosomal protein bL28 family.

The sequence is that of Large ribosomal subunit protein bL28 from Nitratidesulfovibrio vulgaris (strain ATCC 29579 / DSM 644 / CCUG 34227 / NCIMB 8303 / VKM B-1760 / Hildenborough) (Desulfovibrio vulgaris).